The primary structure comprises 272 residues: Phosphoglycolate phosphatase (272 aa).

D19 serves as the catalytic Nucleophile. The Mg(2+) site is built by D19, D21, and D182.

It belongs to the HAD-like hydrolase superfamily. CbbY/CbbZ/Gph/YieH family. Mg(2+) is required as a cofactor.

The catalysed reaction is 2-phosphoglycolate + H2O = glycolate + phosphate. It participates in organic acid metabolism; glycolate biosynthesis; glycolate from 2-phosphoglycolate: step 1/1. In terms of biological role, specifically catalyzes the dephosphorylation of 2-phosphoglycolate. Is involved in the dissimilation of the intracellular 2-phosphoglycolate formed during the DNA repair of 3'-phosphoglycolate ends, a major class of DNA lesions induced by oxidative stress. The polypeptide is Phosphoglycolate phosphatase (Pseudomonas fluorescens (strain Pf0-1)).